The chain runs to 389 residues: uncharacterized protein (389 aa).

The first 23 residues, 1–23 (MHFAKLGAIGLLGSIICAYAASA), serve as a signal peptide directing secretion.

It belongs to the IUNH family.

It is found in the endoplasmic reticulum lumen. This is an uncharacterized protein from Schizosaccharomyces pombe (strain 972 / ATCC 24843) (Fission yeast).